Here is a 660-residue protein sequence, read N- to C-terminus: Bifunctional polymyxin resistance protein ArnA (660 aa).

The segment at methionine 1–leucine 304 is formyltransferase ArnAFT. Residue histidine 104 is the Proton donor; for formyltransferase activity of the active site. Residues arginine 114 and threonine 136–aspartate 140 contribute to the (6R)-10-formyltetrahydrofolate site. The segment at arginine 314–glutamine 660 is dehydrogenase ArnADH. NAD(+) is bound by residues aspartate 347 and aspartate 368–isoleucine 369. Residues alanine 393, tyrosine 398, and threonine 432 to serine 433 each bind UDP-alpha-D-glucuronate. Glutamate 434 (proton acceptor; for decarboxylase activity) is an active-site residue. Residues arginine 460, asparagine 492, lysine 526–arginine 535, and tyrosine 613 each bind UDP-alpha-D-glucuronate. Arginine 619 functions as the Proton donor; for decarboxylase activity in the catalytic mechanism.

It in the N-terminal section; belongs to the Fmt family. UDP-L-Ara4N formyltransferase subfamily. The protein in the C-terminal section; belongs to the NAD(P)-dependent epimerase/dehydratase family. UDP-glucuronic acid decarboxylase subfamily. Homohexamer, formed by a dimer of trimers.

The catalysed reaction is UDP-alpha-D-glucuronate + NAD(+) = UDP-beta-L-threo-pentopyranos-4-ulose + CO2 + NADH. It catalyses the reaction UDP-4-amino-4-deoxy-beta-L-arabinose + (6R)-10-formyltetrahydrofolate = UDP-4-deoxy-4-formamido-beta-L-arabinose + (6S)-5,6,7,8-tetrahydrofolate + H(+). It functions in the pathway nucleotide-sugar biosynthesis; UDP-4-deoxy-4-formamido-beta-L-arabinose biosynthesis; UDP-4-deoxy-4-formamido-beta-L-arabinose from UDP-alpha-D-glucuronate: step 1/3. It participates in nucleotide-sugar biosynthesis; UDP-4-deoxy-4-formamido-beta-L-arabinose biosynthesis; UDP-4-deoxy-4-formamido-beta-L-arabinose from UDP-alpha-D-glucuronate: step 3/3. The protein operates within bacterial outer membrane biogenesis; lipopolysaccharide biosynthesis. Functionally, bifunctional enzyme that catalyzes the oxidative decarboxylation of UDP-glucuronic acid (UDP-GlcUA) to UDP-4-keto-arabinose (UDP-Ara4O) and the addition of a formyl group to UDP-4-amino-4-deoxy-L-arabinose (UDP-L-Ara4N) to form UDP-L-4-formamido-arabinose (UDP-L-Ara4FN). The modified arabinose is attached to lipid A and is required for resistance to polymyxin and cationic antimicrobial peptides. The sequence is that of Bifunctional polymyxin resistance protein ArnA from Sodalis glossinidius (strain morsitans).